The primary structure comprises 198 residues: MDDTLFQLKFTSKQLERLAKKAEKDSKSEQAKVKKALQQKNVECARVYAENAIRKKNEGLNWLRMASRVDAVASKVQTALTMKGVAKNMTQVTKALDKALSSMDLQKVSAVMDKFETQVQNLDVHTSVMEDSMSSATTLSTPQQQVDDLILQIAEESGLEVEDQLSQLPAGASALGETSARAQEKEDQLSRRLAALRN.

Coiled-coil stretches lie at residues 7–41 and 176–198; these read QLKF…QQKN and GETS…ALRN. The interval 171 to 198 is disordered; the sequence is GASALGETSARAQEKEDQLSRRLAALRN. Positions 187-197 match the MIT-interacting motif motif; it reads DQLSRRLAALR.

This sequence belongs to the SNF7 family. In terms of assembly, probable peripherally associated component of the endosomal sorting required for transport complex III (ESCRT-III).

It localises to the cytoplasm. It is found in the endosome membrane. Its function is as follows. Probable peripherally associated component of the endosomal sorting required for transport complex III (ESCRT-III) which is involved in multivesicular bodies (MVBs) formation and sorting of endosomal cargo proteins into MVBs. MVBs contain intraluminal vesicles (ILVs) that are generated by invagination and scission from the limiting membrane of the endosome and mostly are delivered to lysosomes enabling degradation of membrane proteins, such as stimulated growth factor receptors, lysosomal enzymes and lipids. In Danio rerio (Zebrafish), this protein is Charged multivesicular body protein 1a (chmp1a).